The primary structure comprises 270 residues: Proteasome subunit alpha type-1 (270 aa).

The interval 239–270 (SMEAAEEAPAAEAESSSMQEEDKGTDAAPMDI) is disordered. Low complexity predominate over residues 245 to 256 (EAPAAEAESSSM).

This sequence belongs to the peptidase T1A family. In terms of assembly, the 26S proteasome consists of a 20S proteasome core and two 19S regulatory subunits. The 20S proteasome core is composed of 28 subunits that are arranged in four stacked rings, resulting in a barrel-shaped structure. The two end rings are each formed by seven alpha subunits, and the two central rings are each formed by seven beta subunits. The catalytic chamber with the active sites is on the inside of the barrel.

It localises to the cytoplasm. The protein localises to the nucleus. In terms of biological role, the proteasome is a multicatalytic proteinase complex which is characterized by its ability to cleave peptides with Arg, Phe, Tyr, Leu, and Glu adjacent to the leaving group at neutral or slightly basic pH. The proteasome has an ATP-dependent proteolytic activity. The polypeptide is Proteasome subunit alpha type-1 (PAF1) (Oryza sativa subsp. japonica (Rice)).